A 264-amino-acid chain; its full sequence is MQQYLDLMKHILAEGVDKSDRTGTGTRSVFGYQMRFDLSKGFPLVTTKKCHMRSIIHELLWFLKGETNIAYLRENKVSIWDEWADDNGDLGPVYGAQWRSWPTQSGDAIDQISQVIAQIKAQPDSRRLIVSAWNVGELDKMALAPCHAFFQFYVADGKLSCQLYQRSCDVFLGLPFNIASYALLTMMVAQQCDLALGDFVWTGGDTHLYSNHMEQTVLQLSREPKPLPLMTILRKPESIFDYQFEDFELTNYNPHPHIKAPVAV.

Position 21 (Arg-21) interacts with dUMP. His-51 is a (6R)-5,10-methylene-5,6,7,8-tetrahydrofolate binding site. 126 to 127 (RR) serves as a coordination point for dUMP. Cys-146 (nucleophile) is an active-site residue. DUMP contacts are provided by residues 166-169 (RSCD), Asn-177, and 207-209 (HLY). Position 169 (Asp-169) interacts with (6R)-5,10-methylene-5,6,7,8-tetrahydrofolate. (6R)-5,10-methylene-5,6,7,8-tetrahydrofolate is bound at residue Ala-263.

Belongs to the thymidylate synthase family. Bacterial-type ThyA subfamily. Homodimer.

The protein resides in the cytoplasm. It catalyses the reaction dUMP + (6R)-5,10-methylene-5,6,7,8-tetrahydrofolate = 7,8-dihydrofolate + dTMP. It participates in pyrimidine metabolism; dTTP biosynthesis. Catalyzes the reductive methylation of 2'-deoxyuridine-5'-monophosphate (dUMP) to 2'-deoxythymidine-5'-monophosphate (dTMP) while utilizing 5,10-methylenetetrahydrofolate (mTHF) as the methyl donor and reductant in the reaction, yielding dihydrofolate (DHF) as a by-product. This enzymatic reaction provides an intracellular de novo source of dTMP, an essential precursor for DNA biosynthesis. In Shewanella putrefaciens (strain CN-32 / ATCC BAA-453), this protein is Thymidylate synthase.